Here is a 257-residue protein sequence, read N- to C-terminus: Thiazole synthase (257 aa).

Residue Lys96 is the Schiff-base intermediate with DXP of the active site. Residues Gly157, 184–185, and 206–207 each bind 1-deoxy-D-xylulose 5-phosphate; these read AG and NT.

It belongs to the ThiG family. In terms of assembly, homotetramer. Forms heterodimers with either ThiH or ThiS.

It is found in the cytoplasm. The catalysed reaction is [ThiS sulfur-carrier protein]-C-terminal-Gly-aminoethanethioate + 2-iminoacetate + 1-deoxy-D-xylulose 5-phosphate = [ThiS sulfur-carrier protein]-C-terminal Gly-Gly + 2-[(2R,5Z)-2-carboxy-4-methylthiazol-5(2H)-ylidene]ethyl phosphate + 2 H2O + H(+). Its pathway is cofactor biosynthesis; thiamine diphosphate biosynthesis. In terms of biological role, catalyzes the rearrangement of 1-deoxy-D-xylulose 5-phosphate (DXP) to produce the thiazole phosphate moiety of thiamine. Sulfur is provided by the thiocarboxylate moiety of the carrier protein ThiS. In vitro, sulfur can be provided by H(2)S. The chain is Thiazole synthase from Rhizobium meliloti (strain 1021) (Ensifer meliloti).